We begin with the raw amino-acid sequence, 115 residues long: U3-lycotoxin-Ls1k (115 aa).

An N-terminal signal peptide occupies residues 1-20 (MKFVLLFGVLVVTLFSYSSA). A propeptide spanning residues 21–44 (EMLDDFDQADEDELLSLIEKEEAR) is cleaved from the precursor. 4 disulfides stabilise this stretch: Cys48/Cys63, Cys55/Cys72, Cys62/Cys87, and Cys74/Cys85.

The protein belongs to the neurotoxin 19 (CSTX) family. 01 subfamily. In terms of tissue distribution, expressed by the venom gland.

It localises to the secreted. This chain is U3-lycotoxin-Ls1k, found in Lycosa singoriensis (Wolf spider).